A 284-amino-acid chain; its full sequence is uncharacterized protein (284 aa).

The C3H1-type zinc finger occupies 37 to 65 (NEKKLICFSIINGENCIYGPNCTYAHSLS).

This is an uncharacterized protein from Acanthamoeba polyphaga (Amoeba).